We begin with the raw amino-acid sequence, 483 residues long: Glutamyl-tRNA(Gln) amidotransferase subunit A (483 aa).

Catalysis depends on charge relay system residues Lys77 and Ser152. Ser176 (acyl-ester intermediate) is an active-site residue.

This sequence belongs to the amidase family. GatA subfamily. In terms of assembly, heterotrimer of A, B and C subunits.

The catalysed reaction is L-glutamyl-tRNA(Gln) + L-glutamine + ATP + H2O = L-glutaminyl-tRNA(Gln) + L-glutamate + ADP + phosphate + H(+). In terms of biological role, allows the formation of correctly charged Gln-tRNA(Gln) through the transamidation of misacylated Glu-tRNA(Gln) in organisms which lack glutaminyl-tRNA synthetase. The reaction takes place in the presence of glutamine and ATP through an activated gamma-phospho-Glu-tRNA(Gln). The sequence is that of Glutamyl-tRNA(Gln) amidotransferase subunit A from Listeria welshimeri serovar 6b (strain ATCC 35897 / DSM 20650 / CCUG 15529 / CIP 8149 / NCTC 11857 / SLCC 5334 / V8).